We begin with the raw amino-acid sequence, 443 residues long: Xaa-Pro dipeptidase (443 aa).

Residues Asp-246, Asp-257, His-339, Glu-384, and Glu-423 each contribute to the Mn(2+) site.

The protein belongs to the peptidase M24B family. Bacterial-type prolidase subfamily. Mn(2+) is required as a cofactor.

The enzyme catalyses Xaa-L-Pro dipeptide + H2O = an L-alpha-amino acid + L-proline. Functionally, splits dipeptides with a prolyl residue in the C-terminal position. This is Xaa-Pro dipeptidase from Pectobacterium atrosepticum (strain SCRI 1043 / ATCC BAA-672) (Erwinia carotovora subsp. atroseptica).